The following is a 524-amino-acid chain: Cytokinin dehydrogenase 7 (524 aa).

Positions 58-238 (NCVKPLAVVR…TRARVLLQPA (181 aa)) constitute an FAD-binding PCMH-type domain. 4 residues coordinate FAD: Ala91, Gly93, Asn94, and Gly95. His96 is subject to Pros-8alpha-FAD histidine. The FAD site is built by Ser97, Gln101, Asp162, Thr167, Ser173, Val177, Ile228, Tyr479, Ser514, and Gln517.

Belongs to the oxygen-dependent FAD-linked oxidoreductase family. FAD is required as a cofactor. Expressed in the vasculature of roots, hypocotyls, cotyledons and leaves of young seedlings. In flowers, expressed in the transmitting tissue of the gynoecium prior to pollination. Expressed in the mature embryo sac with maximum activity in the egg cell and the synergids.

The protein localises to the cytoplasm. It localises to the cytosol. The catalysed reaction is N(6)-dimethylallyladenine + A + H2O = 3-methyl-2-butenal + adenine + AH2. Catalyzes the oxidation of cytokinins, a family of N(6)-substituted adenine derivatives that are plant hormones, where the substituent is an isopentenyl group. Catalyzes in vitro the oxidation of various types of cytokinin nucleotides that are known as direct products of cytokinin biosynthesis. The sequence is that of Cytokinin dehydrogenase 7 (CKX7) from Arabidopsis thaliana (Mouse-ear cress).